Here is a 374-residue protein sequence, read N- to C-terminus: Chaperone protein DnaJ (374 aa).

Residues 5-70 enclose the J domain; it reads DYYEVLGVER…SKRAAFDQYG (66 aa). Residues 133 to 211 form a CR-type zinc finger; the sequence is GTTVSIRVPT…CHGEGRVEEY (79 aa). Residues C146, C149, C163, C166, C185, C188, C199, and C202 each coordinate Zn(2+). 4 CXXCXGXG motif repeats span residues 146 to 153, 163 to 170, 185 to 192, and 199 to 206; these read CQPCDGSG, CPTCGGIG, CPRCHGQG, and CTSCHGEG.

It belongs to the DnaJ family. Homodimer. It depends on Zn(2+) as a cofactor.

The protein localises to the cytoplasm. Participates actively in the response to hyperosmotic and heat shock by preventing the aggregation of stress-denatured proteins and by disaggregating proteins, also in an autonomous, DnaK-independent fashion. Unfolded proteins bind initially to DnaJ; upon interaction with the DnaJ-bound protein, DnaK hydrolyzes its bound ATP, resulting in the formation of a stable complex. GrpE releases ADP from DnaK; ATP binding to DnaK triggers the release of the substrate protein, thus completing the reaction cycle. Several rounds of ATP-dependent interactions between DnaJ, DnaK and GrpE are required for fully efficient folding. Also involved, together with DnaK and GrpE, in the DNA replication of plasmids through activation of initiation proteins. The chain is Chaperone protein DnaJ from Pseudomonas putida (strain ATCC 700007 / DSM 6899 / JCM 31910 / BCRC 17059 / LMG 24140 / F1).